A 435-amino-acid chain; its full sequence is AP-2 complex subunit mu (435 aa).

The MHD domain maps to 170-434; sequence RNELFLDVLE…IGRSGIYETR (265 aa). A 1,2-diacyl-sn-glycero-3-phospho-(1D-myo-inositol-3,4,5-trisphosphate) is bound by residues K341, K345, and K354.

The protein belongs to the adaptor complexes medium subunit family. Adaptor protein complex 2 (AP-2) is a heterotetramer composed of two large adaptins (alpha-type subunit and beta-type subunit), a medium adaptin (mu-type subunit) and a small adaptin (sigma-type subunit).

The protein localises to the cell membrane. The protein resides in the membrane. Its subcellular location is the coated pit. Its function is as follows. Component of the adaptor complexes which link clathrin to receptors in coated vesicles. Clathrin-associated protein complexes are believed to interact with the cytoplasmic tails of membrane proteins, leading to their selection and concentration. AP50 is a subunit of the plasma membrane adaptor. The complex binds polyphosphoinositide-containing lipids. The protein is AP-2 complex subunit mu (ap2m1) of Xenopus laevis (African clawed frog).